Reading from the N-terminus, the 1438-residue chain is DNA-directed RNA polymerase subunit beta' (1438 aa).

Residues Cys-72, Cys-74, Cys-87, and Cys-90 each coordinate Zn(2+). Asp-483, Asp-485, and Asp-487 together coordinate Mg(2+). Residues Cys-831, Cys-905, Cys-912, and Cys-915 each coordinate Zn(2+).

The protein belongs to the RNA polymerase beta' chain family. As to quaternary structure, the RNAP catalytic core consists of 2 alpha, 1 beta, 1 beta' and 1 omega subunit. When a sigma factor is associated with the core the holoenzyme is formed, which can initiate transcription. Mg(2+) is required as a cofactor. Requires Zn(2+) as cofactor.

The catalysed reaction is RNA(n) + a ribonucleoside 5'-triphosphate = RNA(n+1) + diphosphate. In terms of biological role, DNA-dependent RNA polymerase catalyzes the transcription of DNA into RNA using the four ribonucleoside triphosphates as substrates. The chain is DNA-directed RNA polymerase subunit beta' from Flavobacterium psychrophilum (strain ATCC 49511 / DSM 21280 / CIP 103535 / JIP02/86).